The chain runs to 441 residues: MENNSHNVDERRAARMRGAERYKIQNVEFSLDQNLLANLESSTSSSTRSSPASNQQNLEIVSQSEAYHKISDLDDSTSIFSISDQENILERRISEEVVRENSVSSIENVSSSAVARETQSSANILVKDNHFFSHKQKKIQRESIPFHKRDNIETSDAYSSSILENSPPNKVQRLSSLDSSQDSFQEEHPGNVTGTTFSSQAPEERIASPISTSSPESLTNQSSSLQSSLQTSSMAPRNLLDQSTEKDIVVGASDELVRIELTKLSKEAGGSKTLNELDAVQQFFQEFIKENEPLEPYVVKVKNAFVEQVSIRLLELIDLLDANRILSTACKKAANEKLAVQRDLSKLREDRLSVQRKKIQLRNEYIKLSHQQNFLDDIDDFFSQCETVKNELENVTTTPNSTEAFSEINEYASALSKNYGLESQLVELQSLLTQFYQKFLS.

Over residues 160-173 the composition is skewed to polar residues; sequence SSILENSPPNKVQR. The disordered stretch occupies residues 160–240; sequence SSILENSPPN…TSSMAPRNLL (81 aa). A compositionally biased stretch (low complexity) spans 174 to 183; sequence LSSLDSSQDS. The segment covering 192–201 has biased composition (polar residues); sequence VTGTTFSSQA. The span at 217-233 shows a compositional bias: low complexity; sequence SLTNQSSSLQSSLQTSS.

The protein belongs to the CENP-U/AME1 family. In terms of assembly, component of the heterotetrameric kinetochore subcomplex COMA, which consists of fta2, fta7, mal2 and mis17. The COMA subcomplex is part of a larger constitutive centromere-associated network (CCAN) (also known as central kinetochore Sim4 complex in fission yeast), which is composed of at least cnl2, cnp3, cnp20, fta1, fta2, fta3, fta4, fta6, fta7, mal2, mhf1, mhf2, mis6, mis15, mis17, sim4 and wip1. Interacts with mis6 and mis15.

It localises to the nucleus. It is found in the chromosome. The protein localises to the centromere. The protein resides in the kinetochore. Its function is as follows. Component of the kinetochore, a multiprotein complex that assembles on centromeric DNA and attaches chromosomes to spindle microtubules, mediating chromosome segregation and sister chromatid segregation during meiosis and mitosis. Component of the inner kinetochore COMA complex, which connects centromere-associated proteins and the outer kinetochore. COMA interacts with other inner kinetochore proteins to form the inner kinetochore constitutive centromere-associated network (CCAN), which serves as a structural platform for outer kinetochore assembly. This chain is Inner kinetochore subunit mis17 (mis17), found in Schizosaccharomyces pombe (strain 972 / ATCC 24843) (Fission yeast).